We begin with the raw amino-acid sequence, 421 residues long: 2-deoxystreptamine N-acetyl-D-glucosaminyltransferase (421 aa).

The protein belongs to the glycosyltransferase group 1 family. Glycosyltransferase 4 subfamily.

It carries out the reaction 2-deoxystreptamine + UDP-N-acetyl-alpha-D-glucosamine = 2'-N-acetylparomamine + UDP + H(+). The protein operates within antibiotic biosynthesis; neomycin biosynthesis. Glycosyltransferase involved in the biosynthesis of neomycin by mediating conversion of 2-deoxystreptamine (2-DOS) to 2'-N-acetylparomamine using UDP-alpha-D-glucosamine as sugar donor. The sequence is that of 2-deoxystreptamine N-acetyl-D-glucosaminyltransferase (neoD) from Streptomyces fradiae (Streptomyces roseoflavus).